The following is a 232-amino-acid chain: Thrombin-like enzyme bothrombin (232 aa).

The Peptidase S1 domain occupies 1–223; it reads VIGGDECDIN…YLPWIQSIIA (223 aa). Disulfide bonds link C7–C139, C26–C42, C74–C230, C118–C184, C150–C163, and C174–C199. Catalysis depends on charge relay system residues H41 and D86. N98 and N146 each carry an N-linked (GlcNAc...) asparagine glycan. S178 functions as the Charge relay system in the catalytic mechanism. Residue N225 is glycosylated (N-linked (GlcNAc...) asparagine).

Belongs to the peptidase S1 family. Snake venom subfamily. Monomer. Expressed by the venom gland.

It is found in the secreted. It catalyses the reaction Selective cleavage of Arg-|-Xaa bond in fibrinogen, to form fibrin, and release fibrinopeptide A. The specificity of further degradation of fibrinogen varies with species origin of the enzyme.. Its activity is regulated as follows. Inhibited by diisopropylfluorophosphate (DFP), but not by hirudin. Thrombin-like snake venom serine protease that clots fibrinogen by releasing fibrinopeptide A from the alpha chain of fibrinogen (FGA), induces platelet aggregation through its interaction with GPIb (GP1BA/GP1BB), and activates factor VIII (F8). The polypeptide is Thrombin-like enzyme bothrombin (Bothrops jararaca (Jararaca)).